Here is a 334-residue protein sequence, read N- to C-terminus: MNSAGLEQCGMIMTRKNYYITTDGLLKRNENTLYFINKDLKRPIPINKIYSIYSYGALTISSQALNLLSKEGIPIHFFNRYGFYSGSFYPRETLLSGDVIIKQAEHVIDHDKRIELARSFVRGAALNMRRVLSYYGIENGISDTLMDLDSSNSVTDVMNVEGRIRSDYYNAIDSILPEGFRIGKRTRRPPENMTNAMISFGNSLLYSTVITELYNTQLNPTISYLHEPFERRYSLALDLSEIFKPTLIDRMIISLIKKKAIKAEDFEHGMNHCLLNNSGKRKFLAEYDRRLGKTVKHRELGRKVSYRRLIRLEAYKLIKHLIGQKSYEPFVMWW.

Mn(2+) is bound by residues E161, H226, and E241.

The protein belongs to the CRISPR-associated endonuclease Cas1 family. In terms of assembly, homodimer, forms a heterotetramer with a Cas2 homodimer. Mg(2+) serves as cofactor. The cofactor is Mn(2+).

In terms of biological role, CRISPR (clustered regularly interspaced short palindromic repeat), is an adaptive immune system that provides protection against mobile genetic elements (viruses, transposable elements and conjugative plasmids). CRISPR clusters contain spacers, sequences complementary to antecedent mobile elements, and target invading nucleic acids. CRISPR clusters are transcribed and processed into CRISPR RNA (crRNA). Acts as a dsDNA endonuclease. Involved in the integration of spacer DNA into the CRISPR cassette. In Methanothermobacter thermautotrophicus (strain ATCC 29096 / DSM 1053 / JCM 10044 / NBRC 100330 / Delta H) (Methanobacterium thermoautotrophicum), this protein is CRISPR-associated endonuclease Cas1.